The sequence spans 199 residues: MRNPPALEQLVEALRCLPGVGPKSALRMAYYLLQRDRKGAGILAKSLDQALQVVSHCNLCNNFSEQEICPLCASPARDRTLLCIVEMPSDLMMLEQTQTYQGMYFVLMGRLSPLDGIGPRDIHLDKLLKRAQDGKVEEVILATNYTVEGEATAHYVSELLRARGIQVSRIARGLPMGGEIEHVDSGTLAQALLERRHVR.

The C4-type zinc-finger motif lies at 57–72 (CNLCNNFSEQEICPLC). Residues 80-175 (TLLCIVEMPS…QVSRIARGLP (96 aa)) enclose the Toprim domain.

This sequence belongs to the RecR family.

In terms of biological role, may play a role in DNA repair. It seems to be involved in an RecBC-independent recombinational process of DNA repair. It may act with RecF and RecO. This Methylobacillus flagellatus (strain ATCC 51484 / DSM 6875 / VKM B-1610 / KT) protein is Recombination protein RecR.